The chain runs to 158 residues: Protein GLUTAMINE DUMPER 1 (158 aa).

Residues 1-36 are Extracellular-facing; it reads MRPLSVQSKFEDVATSTSVNHHGVTPQSPWHSPVPY. A helical membrane pass occupies residues 37–57; it reads LFGGLAAMLGLIAFALLILAC. Topologically, residues 58 to 158 are cytoplasmic; that stretch reads SYWRLSSSGE…DTGETTTTSH (101 aa). The interval 65 to 85 is disordered; sequence SGEEDGQNVDEEKESRSGDKA. The span at 66–76 shows a compositional bias: acidic residues; that stretch reads GEEDGQNVDEE. The VIMAG motif lies at 96–100; sequence VIMAG. The interval 126-158 is disordered; that stretch reads ISQEESVAKEEEKMREGEEEKVKDTGETTTTSH. Residues 131–151 are compositionally biased toward basic and acidic residues; sequence SVAKEEEKMREGEEEKVKDTG.

Belongs to the GLUTAMINE DUMPER 1 (TC 9.B.60) family. As to quaternary structure, interacts with LOG2. Post-translationally, ubiquitinated by LOG2 (in vitro). As to expression, expressed in the vascular tissues and in hydathodes. Expressed in the phloem and xylem (at the protein level).

The protein localises to the cell membrane. Its function is as follows. Probable subunit of an amino acid transporter involved in the regulation of the amino acid metabolism. Stimulates amino acid export by activating nonselective amino acid facilitators. Required the interaction with the RING-type E3 ubiquitin-protein ligase LOG2 to fulfill its function. Plays a role in the Gln export at hydathodes, at xylem parenchyma into xylem sap and from mesophyll into leaf apoplasm. Acts upstream genes involved in the salicylic acid (SA) pathway and in the geminivirus-host interaction. This chain is Protein GLUTAMINE DUMPER 1 (GDU1), found in Arabidopsis thaliana (Mouse-ear cress).